A 258-amino-acid polypeptide reads, in one-letter code: Countin-1 (258 aa).

A signal peptide spans 1–21 (MNKLFSLILALFLVNSAVVSS). One can recognise a Saposin B-type domain in the interval 22 to 106 (LDSCSICVDF…EKISVCKTND (85 aa)). Intrachain disulfides connect cysteine 25–cysteine 102, cysteine 28–cysteine 96, and cysteine 56–cysteine 69. Residues asparagine 121 and asparagine 215 are each glycosylated (N-linked (GlcNAc...) asparagine). The segment covering 233 to 248 (AGSFSGSSQSTQTGAA) has biased composition (low complexity). Positions 233 to 258 (AGSFSGSSQSTQTGAASGSGSGFALF) are disordered. Positions 249 to 258 (SGSGSGFALF) are enriched in gly residues.

It belongs to the countin family. As to quaternary structure, component of the counting factor (CF) complex, which includes cf60, cf50, cf45-1 and ctnA.

It is found in the secreted. In terms of biological role, cell-counting factor that limits the maximum size of the multicellular structure. May down-regulate the expression of gp24, which mediates cell adhesion. This Dictyostelium discoideum (Social amoeba) protein is Countin-1 (ctnA).